The chain runs to 218 residues: 3,4-dihydroxy-2-butanone 4-phosphate synthase (218 aa).

D-ribulose 5-phosphate is bound by residues 38–39, Asp43, 151–155, and Glu175; these read RE and RRGHT. Position 39 (Glu39) interacts with Mg(2+). His154 contacts Mg(2+).

This sequence belongs to the DHBP synthase family. As to quaternary structure, homodimer. Mg(2+) is required as a cofactor. The cofactor is Mn(2+).

It carries out the reaction D-ribulose 5-phosphate = (2S)-2-hydroxy-3-oxobutyl phosphate + formate + H(+). It participates in cofactor biosynthesis; riboflavin biosynthesis; 2-hydroxy-3-oxobutyl phosphate from D-ribulose 5-phosphate: step 1/1. Functionally, catalyzes the conversion of D-ribulose 5-phosphate to formate and 3,4-dihydroxy-2-butanone 4-phosphate. The protein is 3,4-dihydroxy-2-butanone 4-phosphate synthase of Vibrio cholerae serotype O1 (strain ATCC 39541 / Classical Ogawa 395 / O395).